We begin with the raw amino-acid sequence, 59 residues long: Large ribosomal subunit protein bL32 (59 aa).

It belongs to the bacterial ribosomal protein bL32 family. Part of the 50S ribosomal subunit.

In Bacillus subtilis (strain 168), this protein is Large ribosomal subunit protein bL32 (rpmF).